Consider the following 135-residue polypeptide: Large ribosomal subunit protein uL16m (135 aa).

The protein belongs to the universal ribosomal protein uL16 family.

It localises to the mitochondrion. The chain is Large ribosomal subunit protein uL16m (RPL16) from Prototheca wickerhamii.